A 320-amino-acid chain; its full sequence is Homoserine kinase (320 aa).

ATP is bound at residue 100–110; the sequence is PLSSGMGSSAA.

Belongs to the GHMP kinase family. Homoserine kinase subfamily.

It is found in the cytoplasm. It catalyses the reaction L-homoserine + ATP = O-phospho-L-homoserine + ADP + H(+). The protein operates within amino-acid biosynthesis; L-threonine biosynthesis; L-threonine from L-aspartate: step 4/5. In terms of biological role, catalyzes the ATP-dependent phosphorylation of L-homoserine to L-homoserine phosphate. The chain is Homoserine kinase from Chlorobium phaeobacteroides (strain DSM 266 / SMG 266 / 2430).